We begin with the raw amino-acid sequence, 83 residues long: Delta-conotoxin-like Ac6.1 (83 aa).

An N-terminal signal peptide occupies residues methionine 1–alanine 22. Positions aspartate 23–arginine 51 are excised as a propeptide. Disulfide bonds link cysteine 54–cysteine 69, cysteine 61–cysteine 73, and cysteine 68–cysteine 78. Proline 57 and proline 65 each carry 4-hydroxyproline.

The protein belongs to the conotoxin O1 superfamily. In terms of tissue distribution, expressed by the venom duct.

It localises to the secreted. Delta-conotoxins bind to site 6 of voltage-gated sodium channels (Nav) and inhibit the inactivation process. This Conus achatinus (Little frog cone) protein is Delta-conotoxin-like Ac6.1.